A 396-amino-acid polypeptide reads, in one-letter code: Unsaturated chondroitin disaccharide hydrolase (396 aa).

The active-site Nucleophile is Asp113. Asp113, Asp173, Gly231, Thr233, Arg245, Trp249, Ser363, and Ser366 together coordinate substrate. Catalysis depends on Asp173, which acts as the Proton donor.

It belongs to the glycosyl hydrolase 88 family. Monomer.

It carries out the reaction beta-D-4-deoxy-Delta(4)-GlcpA-(1-&gt;3)-beta-D-GalpNAc6S + H2O = N-acetyl-beta-D-galactosamine 6-sulfate + 5-dehydro-4-deoxy-D-glucuronate. Its function is as follows. Catalyzes the hydrolysis of unsaturated hyaluronate and chondroitin disaccharides. Also degrades unsaturated heparin disaccharides. Releases 4-deoxy-4,5-didehydro D-glucuronic acid or 4-deoxy-4,5-didehydro L-iduronic acid from chondroitin disaccharides, hyaluronan disaccharides and heparin disaccharides and cleaves both glycosidic (1-&gt;3) and (1-&gt;4) bonds. Prefers sulfated glycosaminoglycans compared to unsulfated glycosaminoglycans. Probably required for mammalian cells invasion through the degradation of extracellular sulfated glycosaminoglycans such as chondroitin and hyaluronan. The chain is Unsaturated chondroitin disaccharide hydrolase (ugl) from Streptococcus pneumoniae (strain ATCC BAA-255 / R6).